Reading from the N-terminus, the 152-residue chain is Aspartate carbamoyltransferase regulatory chain (152 aa).

Positions 109, 114, 138, and 141 each coordinate Zn(2+).

Belongs to the PyrI family. Contains catalytic and regulatory chains. It depends on Zn(2+) as a cofactor.

Its function is as follows. Involved in allosteric regulation of aspartate carbamoyltransferase. The polypeptide is Aspartate carbamoyltransferase regulatory chain (Thermoplasma volcanium (strain ATCC 51530 / DSM 4299 / JCM 9571 / NBRC 15438 / GSS1)).